A 435-amino-acid chain; its full sequence is tRNA modification GTPase MnmE (435 aa).

3 residues coordinate (6S)-5-formyl-5,6,7,8-tetrahydrofolate: R20, E77, and K117. The TrmE-type G domain occupies 214–359; it reads GLKIVIAGAP…FIKKLESFCH (146 aa). Residues 224 to 229, 243 to 249, and 268 to 271 each bind GTP; these read NSGKSS, TEEAGTT, and DTAG. Positions 228 and 249 each coordinate Mg(2+). (6S)-5-formyl-5,6,7,8-tetrahydrofolate is bound at residue K435.

The protein belongs to the TRAFAC class TrmE-Era-EngA-EngB-Septin-like GTPase superfamily. TrmE GTPase family. As to quaternary structure, homodimer. Heterotetramer of two MnmE and two MnmG subunits. Requires K(+) as cofactor.

The protein resides in the cytoplasm. In terms of biological role, exhibits a very high intrinsic GTPase hydrolysis rate. Involved in the addition of a carboxymethylaminomethyl (cmnm) group at the wobble position (U34) of certain tRNAs, forming tRNA-cmnm(5)s(2)U34. This chain is tRNA modification GTPase MnmE, found in Bartonella tribocorum (strain CIP 105476 / IBS 506).